A 465-amino-acid polypeptide reads, in one-letter code: Protein hedgehog (465 aa).

A lipid anchor (N-palmitoyl cysteine) is attached at Cys-79. Positions 143, 144, 149, 179, 180, 183, and 185 each coordinate Ca(2+). Gly-251 carries Cholesterol glycine ester lipidation.

It belongs to the hedgehog family. Interacts with shf. The C-terminal part of the hedgehog protein precursor displays an autoproteolysis activity that results in the cleavage of the full-length protein into two parts (N-product and C-product). In addition, the C-terminal part displays a cholesterol transferase activity that results by the covalent attachment of a cholesterol moiety to the C-terminal of the newly generated N-product. The N-product is the active species in both local and long-range signaling, whereas the C-product has no signaling activity. In terms of processing, cholesterylation is required for N-product targeting to lipid rafts and multimerization. Post-translationally, N-palmitoylation by Rasp of the hedgehog N-product, within the secretory pathway, is required for the embryonic and larval patterning activities of the hedgehog signal.

Its subcellular location is the nucleus. It localises to the cytoplasm. The protein localises to the cell membrane. It carries out the reaction glycyl-L-cysteinyl-[protein] + cholesterol + H(+) = [protein]-C-terminal glycyl cholesterol ester + N-terminal L-cysteinyl-[protein]. Its function is as follows. The C-terminal part of the hedgehog protein precursor displays an autoproteolysis activity that results in the cleavage of the full-length protein into two parts (N-product and C-product). In addition, the C-terminal part displays a cholesterol transferase activity that results by the covalent attachment of a cholesterol moiety to the C-terminal of the newly generated N-product. Once cleaved, the C-product has no signaling activity and diffuses from the cell. The dually lipidated hedgehog protein N-product is a morphogen which is essential for a variety of patterning events during development. Establishes the anterior-posterior axis of the embryonic segments and patterns the larval imaginal disks. Binds to the patched (ptc) receptor, which functions in association with smoothened (smo), to activate the transcription of target genes wingless (wg), decapentaplegic (dpp) and ptc. In the absence of hh, ptc represses the constitutive signaling activity of smo through fused (fu). Essential component of a signaling pathway which regulates the Duox-dependent gut immune response to bacterial uracil; required to activate Cad99C-dependent endosome formation, norpA-dependent Ca2+ mobilization and p38 MAPK, which are essential steps in the Duox-dependent production of reactive oxygen species (ROS) in response to intestinal bacterial infection. During photoreceptor differentiation, it up-regulates transcription of Ubr3, which in turn promotes the hh-signaling pathway by mediating the ubiquitination and degradation of cos. The sequence is that of Protein hedgehog from Drosophila yakuba (Fruit fly).